Consider the following 712-residue polypeptide: BTB/POZ domain-containing protein 18 (712 aa).

Residues 34 to 102 (CDVLLQAEGE…LYTSEMEVSQ (69 aa)) enclose the BTB domain. Disordered stretches follow at residues 157-176 (VTPS…PCPL), 212-355 (RACP…EGQV), and 374-410 (ETPL…QEMS). Polar residues predominate over residues 218–228 (QEKNSSPSSHS). Residues 229–238 (QEPRENKNDT) are compositionally biased toward basic and acidic residues. Low complexity predominate over residues 277 to 288 (SKPSSILSGSSS). Positions 303–313 (VNKETPEDKPK) are enriched in basic and acidic residues. Residues 396–410 (PSGTQPFSSNEQEMS) show a composition bias toward polar residues. A phosphoserine mark is found at Ser-420, Ser-671, and Ser-672. Disordered stretches follow at residues 653–676 (KAGK…EEEE) and 691–712 (TTVP…DILT). The span at 702 to 712 (SESETEVDILT) shows a compositional bias: acidic residues.

Its subcellular location is the nucleus. In terms of biological role, specifically required during spermatogenesis to promote expression of piRNA precursors. The piRNA metabolic process mediates the repression of transposable elements during meiosis by forming complexes composed of piRNAs and Piwi proteins and governs the methylation and subsequent repression of transposons, which is essential for the germline integrity. Acts by facilitating transcription elongation at piRNA loci during pachytene. This Homo sapiens (Human) protein is BTB/POZ domain-containing protein 18.